Here is a 124-residue protein sequence, read N- to C-terminus: Small ribosomal subunit protein uS12 (124 aa).

D89 bears the 3-methylthioaspartic acid mark.

The protein belongs to the universal ribosomal protein uS12 family. In terms of assembly, part of the 30S ribosomal subunit. Contacts proteins S8 and S17. May interact with IF1 in the 30S initiation complex.

Functionally, with S4 and S5 plays an important role in translational accuracy. In terms of biological role, interacts with and stabilizes bases of the 16S rRNA that are involved in tRNA selection in the A site and with the mRNA backbone. Located at the interface of the 30S and 50S subunits, it traverses the body of the 30S subunit contacting proteins on the other side and probably holding the rRNA structure together. The combined cluster of proteins S8, S12 and S17 appears to hold together the shoulder and platform of the 30S subunit. This Photobacterium profundum (strain SS9) protein is Small ribosomal subunit protein uS12.